The sequence spans 116 residues: Large ribosomal subunit protein uL18 (116 aa).

Belongs to the universal ribosomal protein uL18 family. In terms of assembly, part of the 50S ribosomal subunit; part of the 5S rRNA/L5/L18/L25 subcomplex. Contacts the 5S and 23S rRNAs.

Its function is as follows. This is one of the proteins that bind and probably mediate the attachment of the 5S RNA into the large ribosomal subunit, where it forms part of the central protuberance. This is Large ribosomal subunit protein uL18 from Shewanella frigidimarina (strain NCIMB 400).